Reading from the N-terminus, the 221-residue chain is MSKPSLELKGASFTLSVLHINSSDLNAVMAELDSKLAQAPQFFLGAPLVVNLSAIQDNDFNLHGLKELLLSRQLVIVGITGATIALSNQAKTLGLAIVKAGKQSVTPPPAPRQTKVLKQNIRSGQQVYAKNGDLIIFGAVGNGAEVIADGSIHIYGALRGKAMAGAAGDSSAVIIAHSLEAELVSIAGQYWLAENLQQHSSDKSGCIRLNGESLIVESLPL.

Belongs to the MinC family. In terms of assembly, interacts with MinD and FtsZ.

Functionally, cell division inhibitor that blocks the formation of polar Z ring septums. Rapidly oscillates between the poles of the cell to destabilize FtsZ filaments that have formed before they mature into polar Z rings. Prevents FtsZ polymerization. The polypeptide is Probable septum site-determining protein MinC (Shewanella sp. (strain MR-7)).